The chain runs to 232 residues: MAKLGKRTRAAREAFAGKEELSVEQAVALIKSAASAKFDETVEIAMNLGVDPRHADQMVRGVVGLPNGTGKTVRVAVFARGPKAEEAQAAGADIVGAEDLMETIQSGKIEFDRCIATPDMMPVVGRLGKILGPRNLMPNPKVGTVTMDVAQAVQNAKGGEVQFKVEKAGVIHAGVGKVSFDEAKLVENVRAFVDAVAKAKPAGAKGTYLKKIALSSTMGPGVSVDVASASGN.

Belongs to the universal ribosomal protein uL1 family. As to quaternary structure, part of the 50S ribosomal subunit.

Binds directly to 23S rRNA. The L1 stalk is quite mobile in the ribosome, and is involved in E site tRNA release. In terms of biological role, protein L1 is also a translational repressor protein, it controls the translation of the L11 operon by binding to its mRNA. The sequence is that of Large ribosomal subunit protein uL1 from Ruegeria pomeroyi (strain ATCC 700808 / DSM 15171 / DSS-3) (Silicibacter pomeroyi).